The chain runs to 202 residues: Ribosomal RNA small subunit methyltransferase G (202 aa).

S-adenosyl-L-methionine contacts are provided by residues Gly-75, Phe-80, 125 to 126 (VQ), and Arg-139.

Belongs to the methyltransferase superfamily. RNA methyltransferase RsmG family.

The protein resides in the cytoplasm. Its function is as follows. Specifically methylates the N7 position of a guanine in 16S rRNA. This is Ribosomal RNA small subunit methyltransferase G from Mesomycoplasma hyopneumoniae (strain J / ATCC 25934 / NCTC 10110) (Mycoplasma hyopneumoniae).